The primary structure comprises 412 residues: ORC1-type DNA replication protein 2 (412 aa).

ATP contacts are provided by residues 61–65 (VGKTA), Y207, and R219.

This sequence belongs to the CDC6/cdc18 family.

Involved in regulation of DNA replication. In Haloarcula marismortui (strain ATCC 43049 / DSM 3752 / JCM 8966 / VKM B-1809) (Halobacterium marismortui), this protein is ORC1-type DNA replication protein 2 (cdc6b).